A 7354-amino-acid chain; its full sequence is MSSSDEETLSERSCRSERSCRSERSYRSERSGSLSPCPPGDTLPWNLPLHEQKKRKSQDSVLDPAERAVVRVADERDRVQKKTFTKWVNKHLMKVRKHINDLYEDLRDGHNLISLLEVLSGIKLPREKGRMRFHRLQNVQIALDFLKQRQVKLVNIRNDDITDGNPKLTLGLIWTIILHFQISDIYISGESGDMSAKEKLLLWTQKVTAGYTGVKCTNFSSCWSDGKMFNALIHRYRPDLVDMERVQVQSNRENLEQAFEVAERLGVTRLLDAEDVDVPSPDEKSVITYVSSIYDAFPKVPEGGEGISATEVDSRWQEYQSRVDSLIPWIRQHTILMSDKSFPQNPVELKALYNQYIHFKETEILAKEREKGRIKELYKLLEVWIEFGRIKLPQGYHPNHVEEEWGKLIVEMLEREKSLRPAVERLELLLQIANKIQNGALNCEEKLTLAKNTLQADAAHLESGQPVQCESDVIMYIQECEGLIRQLQVDLQILRDEKYYQLEELAFRVMRLQDELVTLRLECTNLYRKGHFSSLELVPPSTLTTTHLKAEPLNKTTHSSSTSWFRKPMTRTELVSISSSEDEGNLRFVYELLSWVEEMQMKLERAEWGNDLPSVELQLETQQHIHTSVEELGSSVKEARLYEGKMSQNFHTSYVETLGKLETQYCKLKETSSFRMRHLQSLHKFVSRATAELIWLNGKEEEELACDWSDSNPNISAKKTYFSELTMELEGKQDVFRSLQDTAEVLSLENHPAKQTVEAYSAAVQSQLQWMKQLCLCVEQHVKENAAYFQFFSDARDLESFLRNLQDSIKRKYTCDRSTSLSRLEDLLQDSMDEKEQLIQSKSSVASLVGRSKTIVQLKPRNPDHVLKSTLSVKAICDYRQIEITICKNDECVLEDNSQRTKWKVISPTGNEAMVPSVCFLIPPPNKEAIEMASRVEQSYQKVMALWHQLHINTKSLISWNYLRKDLDTVQTWSLEKLRSLAPGECHQVMKNLQAHYEDFLQDSHDSALFSVADRLRIEEEVEACKAHFQHLMKSLENEDKEETLAKVYISELKNIRLLLEECEQRLLKQIQSPASSKTDRDARQDITLRIAEQEHTQEDLQHLRSDLDAISMKCNVFLQQSPSGSSATTLRSELNLMVEKMDHVYGLSTVYLNKLKTIDVIVRSMQDAELLVKGYEIKLSQEEAVPADLSALESHRTTLQHWLSDVKDKNSVFSVLDEEITKAKKVAEQLRHPASEPNLDLERYQEKGSQLQERWHRVIAQLETRQSEVESIQEVLRDYRACHGTLIKWIEETTAQQEMMKPGQAEDSRVLSEQLSQQTELFAEIERNQTKLDQCQKFSQQYSTIVKDYELQLMTYKAFVESQQKSPGKRRRMISSSDAITQEFMDLRTRYTALVTLTTQHVKYISDALRRLEEEEKVVEEEKQEHVEKVKDLLGWVSTLARNTQGTTTSSHTSASADIEKAILEQQVLAEELTTKKEQVSEAIKTSQIFLAKHGHKLSEGEKEQISEQLRVLNKTYHDLCDGSANQLQQLQSELAQQTEQKGCRAVAGVIDLGTVEIFPIFRAMQKGLIDQDTGLVLLESQIIMSGLIDPENSEKLSLEEGLTRNFINLPIYQQLLGLRDSLSLVSRLTGTLGSLSVVEAIEKKIISERLGLKVLEVHLATGGFSLPPSENCINLEEAFHQGFIASSLHSELQSHLRSSKNLIDPNTAEKVGLLDLMQRCIIHQESGLKLLPVKQLAGGMVSLKSGRKVSIFRAVQEGLIDRQVTVRLLEAQLFAGGIVDPRTGHRLTVEEAVRHNLIDQDMACAILIRQLQTGGIIDTVTGDRMTIDEAVTNNLVAAKIALVILESLWSFMGLLLPESGEILPITDALEQGIVSTELAHKILHNRQQIEALFLPTLTEIWSWEKATESGILDKDLVNNLRSVCIPDMMPHIQLADSAEQSKVGFAAGKPPVSGPREEGSSHGEKLLFQLMTHSYIHAHTGQRLLLLDQELVEMLTSRDDCQVILPEVFEIQHQRLNTSEALQELYTGTISQISSAKHPRKPCESQFLSQNKDYPSQENCTEAKGERSVVGIECSPAESPERELFLKEQEAIIENVGSLKVINKVKLKLQRPLLGSRKEEQAETLREENISGDPLLVECPEESEGKDLSTEKSKCQTPTKCSFTCHKEQVKTIKDIPSETGTSLIKSQNQMSQFQVDTSVGLRSEFKSEHDMNVNSLEKELKEELLVKDGHKQSQEGQSVADGQTVALEKTDTEDNADEPALLHSSPFEDATLSTLSAQLQDGGIFNEETGQKLLLNEAIAQGLVSSHTAVKLMGKLNMFRGFFDSQTCESLTTEEVIDEGLMDEKLLYNVLMSDKAISGILDPRTHSLCSVKEAVAAGLLDKETATRILEGQVITGGIVDLKRGKKLSVTLASNLGLVDTADQTELINLEKATKGRGAEKAVKERLIELQMETAGLMDPESKAPLTVLQSIDRGILEREAAVYLLTKQVLDGGIIHHISGLRLSVDNAFKHGLIGEDMARQLRKVENFIHYQFFHPQTKEALSFSEAIKLDLVSPDLKREIQEIQDFSGNLGDFIYGQKLTLAKTNKEESLANKTELPSGVMHGVIDPENCTIIPYSELVKKCRIDTESGWRYLEVIPFSDIKDEAGNNVLTPPEAIQLGKVDFASALKVLEAQANTGGIIDMATGKRVTLASALEKKLLDENMARIIASHQMLSGGIIDIYSDQRVTLNDAVEKRLISPELAAMIQVDPLAEQGGTGVCELKGDFLRKELLSESSKTPRESYSKEKHEAVLQAGSLCAPEKAGIRGSNGEKAEKGRKISVEMEGQRQDEKASSDSKVSASILSPFGFEGESSYQVSVTHPCSESCDLKPREETRSCMKKCAVVERDKVVTQIKMVSHVKQSTSGLDAEEARERQGRMVSKEQGSHYETAGNLLSERSVRVDRRVRREMGGEQSVQMSREAAVLSEEESDQEVTIGDEPDSFVKSQSMKMIGNDKGKEAGIEKDISVVCKIEGFPSQMTSKDASLTNQDALPFYTEGETKTVNLCSILKPGEKLSQETASTVQKEPLSSEIPRPERLNSQESDEEPQISDVPHISKGDMAAQITTRQETTDVQDLYITSKSSETKDKIFPSKNYIEKLHQEIPMDPTRSHKLKEATISTLETEGISYLDSSDIKSLCEDSKADHKSCGHQKSKVTTTQAKKSLEVVDLLVRDTEEGSSEDRVGQRGPRVLASLLPEKLPTRTVQSENIRQHDAVIPAISEIREEMALSLPCSVVKVDGKIPKEKHKEILGDEQGPFMAIPSGKGIEGVNPEPCRATQNVFTRRLCLEHDEKLVSYLSLLRDIEMRTKQIQPLELNVAELQDLLGQAKELDRELKDLSTVVSQELECVDRIVISQPQEVPAQLLKALEKDAKNLQKSLDSVSDSWSSRFLHLQSAVEVKKATVLNRHKELQGKLQDLRAWVGRASLTLNSKGCDTETDADSLSHTLQPYKDMKQSMAERKSQLDALALDIQLFISEHPQDLSLQQNQEMLQFLSELQRSFQGLVEHTAAQKDVVQGHLQQVQQEVQVKTLQKQQDTCHKKLEDLCNWVGQAERALERHQGGSSSGKSSLLCAEPKVDLKDLQGDIQSHSTSFATAVKDIEGFLEENQTKLSPQELTALREKLHQAKEQYEVLQERTRVAQKELEEAVTSALQQETEKSKAATELAENKRKIDALLDWVGLLWGHLRESHRLAFQEWSSSLELAMEKQTLAATDGHVDVNQVPETLDRQYELMKARHQELLSQQQNFIVATQSVQSFLDQHSHNLTPEERQKLQEKLGELKEQYAASLARSEAELKQTQALRDELQKFLQDHKEFENWLQQSENELDSMHKGGSSPEALNSLLKRQGSFSEDVISHKGDLRFVTISGQKVLETENNFEEGQEPSATRNLVNEKLKDATERYTTLHSKCIRLGSHLSMLLGQYQQFQSSADSLQAWVLTCEASVGKLLSDTVASDPGVLQQQLATTKQLQEELAEHQVPVEKLQKAAHDLLDIEGEPALDCRPIQETTDSISSRFQNLSCSLDERSALLQKAIAQSQSVQESMESLLQSIREVEQNLERDQVASLSSGVIQEALANNMKLKQDIARQKSSLEATHDMVTRFMETADSNSASVLQGKLAELSQRFQQLQLQQQEKESNLKKLLPQAEMFEQLSNKLQQFMENKSRLLASGNQPDQDIAHFSQQIQELTLAMEDQKENLDTLEHLVTTLGSCGFALDLSQHQDKIQNLKKDFTELQKTVQEREKDASTCQEQLDEFRKLIRTFQKWLKETEGNVPPAKTFVSAKELEKQIEHLKDLISDWESKGALLGEINAKGTALESLIMDITAPDSQAKTGSILPPVGSSVGSVNGYHTCKDLTEIQCDMFDVNSKYEKLWEVLRERQESLQTVFSRMEEVQKEASSVLQWLESKEEVLKAMDATLSPTKTETVKAQAESNKAFLAELEQNSPKIQKVKEALAGLLKTYPNSQEAENWKKMQEDLNSRWEKATEVTVARQKQLEESASHLACFQAAESQLRPWLMEKELMMGVLGPLSIDPNMLKQQVQFMLKEFEARRQQHEQLNEAAQGILTGPGDMSPSASQVHKDLQSISQKWVELTDKLNSRSSQIDQAIVKSTQYQDLLQDLSEKVKAIGQRLSGQSAISTQPEAVKQQLEETSEIRSDLGQLDNEIKEAQTLCQELSLLIGEQYLKDELKKRLETVALPLQGLEDLAADRMNRLQAALASTQQFQQMFDELRTWLDEKQSQQAKNCPISAKLERLQCQLQENEEFQKNLNQHSGSYEVIVAEGEALLLSVPPGEEKKTLQNQLVELRSHWEDLSKKTANRQSRLKDCMQKAQKYQGHVEDLVPWIDECKSKMSELQVTLDPVQLESSLLRSKAMLNEAEKRRSLLEILNSAADILINSSEIDEDEIRDEKAGLNQNMDAITEELQAKTSSLEEMTQRLKEFQESFKNIEKKVEGAKHQLEIFDALGSQACSNKNLEKLKAQQEVLQALEPQVDYLRNFTQGLVEDAPDGSDASPLVHQAEVAQQEFLEVKQRVSSSCLTMENKLEGIGQFHCRVREMFSQLADLDDELDGMGAIGRDTDSLQSQIEDVRLFLNKIQALRFDIEDSEAECRKMLEEEGTLDLLGLKRELEALNKQCGKLTERGKVRQEQLELTLGRVEDFYRKLKALNDAATAAEEGEALQWIVGTEVDVINQQLADFKLFQKDQVDPLQVKLQQVNGLGQGLIQSAGKNCDVQGLEHDMDEINTRWNTLNKKVAQRIAQLQEALLHCGKFQDALEPLLSWLTDTEELIANQKPPSAEYKVVKAQIQEQKLLQRLLDDRKATVDMLQAEGGRIAQSAELADREKITGQLESLERRWTDLLSKAAARQKQLEDILVLAKQFHETAEPISDFLSVTANKLANSEPVGTQTAKIHQQIIRHKALNEEIINRKKNVDQAIKNGQALLKQTTGEEVLLIQEKLDGIKTRYADITLTSSKALRTLEQARQLATKFHSTYEELTGWLREAEEELAASGGQSPTGEQIPQFQQRQKELKKEVMEHRLVLDTVNEVSHALLELVPWRAREGLDKLVSDANEQYKLISDTVGQRVDEIDAAIQRSQQYEQAADAELAWVAETKRKLMALGPIRLEQDQTTAQLQVQKAFSIDIIRHKDSMDELFSHRGEIFSTCGEEQKAVLQEKTECLIQQYEAVSLLNSERYARLERAQVLVNQFWETYEELSPWAEETLALIAQLPPPAVDHEQLRQQQEEMRQLRESIAEHKPHIDKILKIGPQLKELNPEEGKMVEEKYQKAENMYAQIKDEVRQRALALDEAVSQSAQFHDKIEPMLETLENLSSRLRMPPLIPAEVDKIRECISDNKSATVELEKLQPSFEALKRRGEELIGRSQGADKDLAAKEIQDKLDQMVFFWEDIKARSEEREIKFLDVLELAEKFWYDMAALLTTIKDTQDIVHDLESPGIDPSIIKQQVEAAETIKEETDGLHEELEFIRILGADLIFACGETEKPEVKKSIDEMNNAWENLNKTWKERLEKLEDAMQAAVQYQDTLQAMFDWLDNTVIKLCTMPPVGTDLNTVKDQLNEMKEFKVEVYQQQIEMEKLNHQGELMLKKATDETDRDIIREPLTELKHLWENLGEKIAHRQHKLEGALLALGQFQHALEELMSWLTHTEELLDAQRPISGDPKVIEVELAKHHVLKNDVLAHQATVATVNKAGSELLESSAGDDASSLRSRLETMNQCWESVLQKTEEREQQLQSTLQQAQGFHSEIEDFLLELNRMENQLSASKPTGGLPETAREQLDTHMELHSQLRAKEEIYNQLLDKGRLMLLSRGDSGSGSKTEQSVALLEQKWHAVSSKVEERKSKLEEALSLATEFQNSLQEFINWLTLAEQSLNIASPPSLILNTVLSQIEEHKVFANEVNDHRDQIIELDQTGNQLKFLSQKQDVVLIKNLLVSVQSRWEKVVQRSIERGRSLDDARKRAKQFHEAWKKLIDWLEDAESHLDSELEISNDPDKIKLQLSKHKEFQKTLGGKQPVYDTTIRTGRALKEKTLLAGDTQKLDNLLGEVRDKWDTVCGKSVERQHKLEEALLFSGQFMDALQALVDWLYKVEPQLAEDQPVHGDLDLVMNLMDAHKVFQKELGKRTGTVQVLKRSGRELIEGSRDDTTWVKGQLQELSTRWDTVCKLSVSKQSRLEQALKQAEEFRDTVHMLLEWLSEAEQTLRFRGALPDDTEALQSLIDTHKEFMKKVEEKRVDVNTAVAMGEAILAVCHPDCITTIKHWITIIRARFEEVLTWAKQHQQRLETALSELVANAELLEELLAWIQWAETTLIQRDQEPIPQNIDRVKALITEHQSFMEEMTRKQPDVDRVTKTYKRKSVEPTHAPFMEKSRSGSRKSLNQPTPPPMPILSQSEAKNPRINQLSARWQQVWLLALERQRKLNDALDRLEELCPELKEFANFDFDVWRKKYMRWMNHKKSRVMDFFRRIDKDQDGKITRQEFIDGILASKFPTTKLEMTAVADIFDRDGDGYIDYYEFVAALHPNKDAYRPTTDADKIEDEVTRQVAQCKCAKRFQVEQIGENKYRFFLGNQFGDSQQLRLVRILRSTVMVRVGGGWMALDEFLVKNDPCRARGRTNIELREKFILPEGASQGMTPFRSRGRRSKPSSRAASPTRSSSSASQSNHSCTSMPSSPATPASGTKVISSSGSKLKRPTPAFHSSRTSLAGDTSNSSSPASTGAKANRADPKKSASRPGSRAGSRAGSRASSRRGSDASDFDLLETQSACSDTSESSAAGGQGSSRRGLTKPSKIPTMSKKTTTASPRTPGPKR.

The tract at residues 1–47 is disordered; that stretch reads MSSSDEETLSERSCRSERSCRSERSYRSERSGSLSPCPPGDTLPWNL. The actin-binding stretch occupies residues 1–295; it reads MSSSDEETLS…VITYVSSIYD (295 aa). Ser4 is modified (phosphoserine). Residues 9–30 are compositionally biased toward basic and acidic residues; sequence LSERSCRSERSCRSERSYRSER. Ser35 is modified (phosphoserine). Thr42 is modified (phosphothreonine). Position 57 is a phosphoserine (Ser57). 2 Calponin-homology (CH) domains span residues 78 to 181 and 194 to 298; these read RVQK…LHFQ and MSAK…DAFP. One copy of the LRR 1 repeat lies at 148–171; it reads QRQVKLVNIRNDDITDGNPKLTLG. Position 280 is a phosphoserine (Ser280). LRR repeat units follow at residues 377 to 399 and 441 to 464; these read LYKLLEVWIEFGRIKLPQGYHPN and LNCEEKLTLAKNTLQADAAHLESG. The SH3 domain occupies 868-925; sequence KSTLSVKAICDYRQIEITICKNDECVLEDNSQRTKWKVISPTGNEAMVPSVCFLIPPP. An LRR 5 repeat occupies 1050 to 1073; it reads ISELKNIRLLLEECEQRLLKQIQS. Phosphoserine is present on Ser1122. LRR repeat units lie at residues 1128-1154, 1187-1210, and 1257-1282; these read ATTLRSELNLMVEKMDHVYGLSTVYLN, PADLSALESHRTTLQHWLSDVKDK, and HRVIAQLETRQSEVESIQEVLRDYRA. Ser1367 and Ser1376 each carry phosphoserine. 5 Plectin repeats span residues 1577–1619, 1654–1696, 1769–1809, 1811–1848, and 1855–1885; these read LVLL…QLLG, LKVL…ELQS, RLLE…CAIL, RQLQTGGIIDTVTGDRMTIDEAVTNNLVAAKIALVILE, and GLLLPESGEILPITDALEQGIVSTELAHKIL. Phosphoserine occurs at positions 2051, 2077, and 2081. Basic and acidic residues-rich tracts occupy residues 2120–2131 and 2145–2155; these read KEEQAETLREEN and SEGKDLSTEKS. The interval 2120-2155 is disordered; that stretch reads KEEQAETLREENISGDPLLVECPEESEGKDLSTEKS. Plectin repeat units follow at residues 2276–2316, 2352–2393, 2394–2425, 2487–2528, and 2671–2715; these read STLS…VKLM, NVLM…RILE, GQVITGGIVDLKRGKKLSVTLASNLGLVDTAD, LLTK…LRKV, and LKVL…ASHQ. Disordered stretches follow at residues 2806-2841, 2951-2978, and 3058-3099; these read AGIRGSNGEKAEKGRKISVEMEGQRQDEKASSDSKV, EMGGEQSVQMSREAAVLSEEESDQEVTI, and SQET…HISK. The span at 2812–2837 shows a compositional bias: basic and acidic residues; the sequence is NGEKAEKGRKISVEMEGQRQDEKASS. Over residues 2968 to 2978 the composition is skewed to acidic residues; it reads SEEESDQEVTI. A phosphoserine mark is found at Ser3082 and Ser3085. 3 LRR repeats span residues 3225–3244, 3606–3630, and 3657–3681; these read VGQRGPRVLASLLPEKLPTR, SGKSSLLCAEPKVDLKDLQGDIQSH, and LTALREKLHQAKEQYEVLQERTRVA. Spectrin repeat units follow at residues 3845-3920 and 3962-4070; these read ELQK…NFEE and QYQQ…ALLQ. The residue at position 3889 (Ser3889) is a Phosphoserine. One copy of the LRR 12 repeat lies at 3898–3920; the sequence is KGDLRFVTISGQKVLETENNFEE. LRR repeat units follow at residues 4087–4112 and 4223–4249; these read LQSIREVEQNLERDQVASLSSGVIQE and IQELTLAMEDQKENLDTLEHLVTTLGS. Residues 4428 to 4536 form a Spectrin 3 repeat; it reads RMEEVQKEAS…TVARQKQLEE (109 aa). Phosphoserine is present on residues Ser4458 and Ser4483. LRR repeat units lie at residues 4473-4496, 4563-4583, and 4728-4751; these read KAFLAELEQNSPKIQKVKEALAGL, GVLGPLSIDPNMLKQQVQFML, and KKRLETVALPLQGLEDLAADRMNR. The Spectrin 4 repeat unit spans residues 4759–4863; that stretch reads TQQFQQMFDE…KTANRQSRLK (105 aa). Residue Ser4921 is modified to Phosphoserine. LRR repeat units follow at residues 5010-5035, 5131-5153, and 5240-5263; these read NKNLEKLKAQQEVLQALEPQVDYLRN, NKIQALRFDIEDSEAECRKMLEE, and KDQVDPLQVKLQQVNGLGQGLIQS. 13 Spectrin repeats span residues 5195–5300, 5307–5409, 5414–5506, 5631–5735, 5742–5844, 5961–6066, 6071–6175, 6181–6284, 6289–6395, 6400–6503, 6508–6614, 6621–6722, and 6726–6830; these read EDFY…QLQE, KFQD…QLED, AKQF…ADIT, RSQQ…ARLE, NQFW…ALDE, LAEK…KLED, AVQY…HKLE, LGQF…QQLQ, QAQG…KLEE, ATEF…RSLD, RAKQ…KLEE, QFMD…RLEQ, and QAEE…QRLE. Thr5394 carries the phosphothreonine modification. LRR repeat units follow at residues 5654 to 5678 and 5763 to 5787; these read MALGPIRLEQDQTTAQLQVQKAFSI and AQLPPPAVDHEQLRQQQEEMRQLRE. Ser5988 carries the phosphoserine modification. N6-acetyllysine is present on Lys6166. Residues 6452 to 6475 form an LRR 23 repeat; sequence RDQIIELDQTGNQLKFLSQKQDVV. Residues 6904–6937 are disordered; sequence SVEPTHAPFMEKSRSGSRKSLNQPTPPPMPILSQ. Ser6923 carries the phosphoserine modification. EF-hand domains are found at residues 7001-7036 and 7037-7072; these read HKKSRVMDFFRRIDKDQDGKITRQEFIDGILASKFP and TTKLEMTAVADIFDRDGDGYIDYYEFVAALHPNKDA. Asp7014, Asp7016, Asp7018, Lys7020, Glu7025, Asp7050, Asp7052, Asp7054, Tyr7056, and Glu7061 together coordinate Ca(2+). Residues 7077 to 7155 form the GAR domain; the sequence is TDADKIEDEV…EFLVKNDPCR (79 aa). The C-terminal tail stretch occupies residues 7077-7354; it reads TDADKIEDEV…ASPRTPGPKR (278 aa). The segment at 7171-7354 is disordered; sequence PEGASQGMTP…ASPRTPGPKR (184 aa). Positions 7191 to 7225 are enriched in low complexity; it reads SSRAASPTRSSSSASQSNHSCTSMPSSPATPASGT. The residue at position 7220 (Thr7220) is a Phosphothreonine. The segment covering 7242–7261 has biased composition (polar residues); that stretch reads FHSSRTSLAGDTSNSSSPAS. Residues Ser7245 and Ser7258 each carry the phosphoserine modification. The span at 7276–7290 shows a compositional bias: low complexity; the sequence is SRPGSRAGSRAGSRA. Positions 7279-7294 are 4 X 4 AA tandem repeats of [GS]-S-R-[AR]; it reads GSRAGSRAGSRASSRR. 2 positions are modified to phosphoserine: Ser7296 and Ser7299. The segment covering 7305–7315 has biased composition (polar residues); that stretch reads ETQSACSDTSE. A compositionally biased stretch (low complexity) spans 7316-7327; that stretch reads SSAAGGQGSSRR.

It belongs to the plakin or cytolinker family. In terms of assembly, interacts with AXIN1, LRP6 and GOLGA4. Found in a complex composed of MACF1, APC, AXIN1, CTNNB1 and GSK3B. Interacts with MAPRE1, CLASP1 and CLASP2. Interacts with CAMSAP3. Phosphorylated on serine residues in the C-terminal tail by GSK3B. Phosphorylation inhibits microtubule-binding and this plays a critical role in bulge stem cell migration and skin wound repair. Wnt-signaling can repress phosphorylation. Enriched in the hair follicle stem cells (at protein level). Isoform 1 and isoform 2 are ubiquitous expressed, with higher levels seen in lung, heart, thymus, spleen and brain.

The protein localises to the cytoplasm. It localises to the cytoskeleton. Its subcellular location is the golgi apparatus. It is found in the cell membrane. The protein resides in the cell projection. The protein localises to the ruffle membrane. F-actin-binding protein which plays a role in cross-linking actin to other cytoskeletal proteins and also binds to microtubules. Plays an important role in ERBB2-dependent stabilization of microtubules at the cell cortex. Acts as a positive regulator of Wnt receptor signaling pathway and is involved in the translocation of AXIN1 and its associated complex (composed of APC, CTNNB1 and GSK3B) from the cytoplasm to the cell membrane. Has actin-regulated ATPase activity and is essential for controlling focal adhesions (FAs) assembly and dynamics. Interaction with CAMSAP3 at the minus ends of non-centrosomal microtubules tethers microtubules minus-ends to actin filaments, regulating focal adhesion size and cell migration. May play role in delivery of transport vesicles containing GPI-linked proteins from the trans-Golgi network through its interaction with GOLGA4. Plays a key role in wound healing and epidermal cell migration. Required for efficient upward migration of bulge cells in response to wounding and this function is primarily rooted in its ability to coordinate microtubule dynamics and polarize hair follicle stem cells. As a regulator of actin and microtubule arrangement and stabilization, it plays an essential role in neurite outgrowth, branching and spine formation during brain development. This chain is Microtubule-actin cross-linking factor 1, isoforms 1/2/3/4, found in Mus musculus (Mouse).